The chain runs to 209 residues: Uracil phosphoribosyltransferase (209 aa).

Residues Arg79, Arg104, and 131-139 (DPMLATGGS) contribute to the 5-phospho-alpha-D-ribose 1-diphosphate site. Residues Ile194 and 199 to 201 (GDA) contribute to the uracil site. Residue Asp200 participates in 5-phospho-alpha-D-ribose 1-diphosphate binding.

It belongs to the UPRTase family. It depends on Mg(2+) as a cofactor.

The enzyme catalyses UMP + diphosphate = 5-phospho-alpha-D-ribose 1-diphosphate + uracil. The protein operates within pyrimidine metabolism; UMP biosynthesis via salvage pathway; UMP from uracil: step 1/1. With respect to regulation, allosterically activated by GTP. In terms of biological role, catalyzes the conversion of uracil and 5-phospho-alpha-D-ribose 1-diphosphate (PRPP) to UMP and diphosphate. This Halalkalibacterium halodurans (strain ATCC BAA-125 / DSM 18197 / FERM 7344 / JCM 9153 / C-125) (Bacillus halodurans) protein is Uracil phosphoribosyltransferase.